We begin with the raw amino-acid sequence, 1383 residues long: DNA-directed RNA polymerase subunit beta (1383 aa).

It belongs to the RNA polymerase beta chain family. The RNAP catalytic core consists of 2 alpha, 1 beta, 1 beta' and 1 omega subunit. When a sigma factor is associated with the core the holoenzyme is formed, which can initiate transcription.

The enzyme catalyses RNA(n) + a ribonucleoside 5'-triphosphate = RNA(n+1) + diphosphate. In terms of biological role, DNA-dependent RNA polymerase catalyzes the transcription of DNA into RNA using the four ribonucleoside triphosphates as substrates. The polypeptide is DNA-directed RNA polymerase subunit beta (Anaplasma phagocytophilum (strain HZ)).